A 350-amino-acid polypeptide reads, in one-letter code: tRNA pseudouridine synthase D (350 aa).

F27 contacts substrate. The active-site Nucleophile is D80. N129 provides a ligand contact to substrate. A TRUD domain is found at 155–303 (GVPNYFGVQR…VDTTRRAINL (149 aa)). Position 329 (F329) interacts with substrate.

This sequence belongs to the pseudouridine synthase TruD family.

It carries out the reaction uridine(13) in tRNA = pseudouridine(13) in tRNA. Functionally, responsible for synthesis of pseudouridine from uracil-13 in transfer RNAs. The polypeptide is tRNA pseudouridine synthase D (Proteus mirabilis (strain HI4320)).